Consider the following 1023-residue polypeptide: NRPS-like oxidoreductase fscA (1023 aa).

The tract at residues 54–454 (TYGDLNGMAT…NHPFVRQCMV (401 aa)) is adenylation. Positions 554 to 637 (PEDDVIGRQI…SIANHVRSAQ (84 aa)) constitute a Carrier domain. Residue S596 is modified to O-(pantetheine 4'-phosphoryl)serine. One can recognise a Thioester reductase (TE) domain in the interval 685–901 (LTGGAGYLGQ…VYDESTTRAR (217 aa)).

This sequence belongs to the NRP synthetase family. Pantetheine 4'-phosphate is required as a cofactor.

The protein operates within secondary metabolite biosynthesis. Its function is as follows. NRPS-like oxidoreductasee; part of the fragmented gene cluster that mediates the biosynthesis of fusarochromene, a tryptophan-derived metabolite closely related to a group of mycotoxins including fusarochromanone. Within the pathway, fscA acts as an oxidoreductase that reduces the carboxyl group of 4-hydroxykyrunenine to primary alcohol. The first step of the pathway is the epimerization of L-tryptophan to D-tryptophan in the presence of the NRPS-like tryptophan epimerase fscC. D-tryptophan is subsequently hydroxylated by the tryptophan 6-hydroxylase fscE to yield 6-hydroxytryptophan. The pyrrole ring undergoes cleavaged by the tryptophan 2,3-dioxygenase fscD and is finally converted to 4-hydroxykyrunenine by the hydrolase fscH. The NRPS-like oxidoreductase fscA reduces the carboxyl group to primary alcohol and the DMATS-type prenyltransferase fscG performs prenylation, followed by the formation of a chromene ring catalyzed by the oxidoreductase fscI, which leads to desacetylfusarochromene. Epoxidation by fscF and rearrangement reactions of chromene double bonds convert compound desacetylfusarochromene to fusarochromanones. Although specific acetyltransferases were not found near the fsc gene cluster, several predicted enzymes containing the N-acetyltransferase superfamily domain are present in the genome of F.equiseti. These predicted enzymes may have the potential to convert desacetylfusarochromene to fusarochromene. The polypeptide is NRPS-like oxidoreductase fscA (Fusarium equiseti (Fusarium scirpi)).